A 297-amino-acid polypeptide reads, in one-letter code: Cell division protein FtsX (297 aa).

The Cytoplasmic portion of the chain corresponds to 1–21 (MRFGFLLNEVLTGFRRNVTMT). A helical membrane pass occupies residues 22 to 42 (IAMILTTAISVGLFGGGMLVV). Residues 43–171 (RLADSSRAIY…LFAVLDGLSN (129 aa)) lie on the Extracellular side of the membrane. The helical transmembrane segment at 172–192 (AAFAVALVQAIGAILLIANMV) threads the bilayer. At 193 to 219 (QVAAYTRRTEIGIMRLVGASRWYTQLP) the chain is on the cytoplasmic side. The chain crosses the membrane as a helical span at residues 220–240 (FLVEAMLAATMGVGIAVAGLM). Residues 241–267 (VVRALFLENALNQFYQANLIAKVDYAD) are Extracellular-facing. Residues 268–288 (ILFITPWLLLLGVAMSGLTAY) traverse the membrane as a helical segment. Residues 289–297 (LTLRLYVRR) are Cytoplasmic-facing.

It belongs to the ABC-4 integral membrane protein family. FtsX subfamily. In terms of assembly, forms a membrane-associated complex with FtsE.

Its subcellular location is the cell membrane. Part of the ABC transporter FtsEX involved in cellular division. The protein is Cell division protein FtsX of Mycobacterium tuberculosis (strain ATCC 25177 / H37Ra).